A 562-amino-acid chain; its full sequence is Tetratricopeptide repeat protein 39A (562 aa).

TPR repeat units follow at residues 273–306 (AIFL…QQNW), 463–496 (CVVK…EKRI), and 504–537 (PNAM…YKNY).

It belongs to the TTC39 family.

This chain is Tetratricopeptide repeat protein 39A (ttc39a), found in Xenopus tropicalis (Western clawed frog).